A 634-amino-acid polypeptide reads, in one-letter code: Chaperone protein HtpG (634 aa).

An a; substrate-binding region spans residues 1–342; sequence MTVDTDKQTL…SADLSLNVSR (342 aa). The interval 343 to 559 is b; the sequence is EILQSGPVVD…QGDLGLQMRQ (217 aa). A c region spans residues 560-634; the sequence is LLEASGQAVP…LNKLLLELSA (75 aa).

The protein belongs to the heat shock protein 90 family. Homodimer.

It localises to the cytoplasm. Its function is as follows. Molecular chaperone. Has ATPase activity. The protein is Chaperone protein HtpG of Xanthomonas campestris pv. campestris (strain 8004).